The primary structure comprises 122 residues: Large ribosomal subunit protein uL14 (122 aa).

Belongs to the universal ribosomal protein uL14 family. Part of the 50S ribosomal subunit. Forms a cluster with proteins L3 and L19. In the 70S ribosome, L14 and L19 interact and together make contacts with the 16S rRNA in bridges B5 and B8.

Functionally, binds to 23S rRNA. Forms part of two intersubunit bridges in the 70S ribosome. The polypeptide is Large ribosomal subunit protein uL14 (Corynebacterium diphtheriae (strain ATCC 700971 / NCTC 13129 / Biotype gravis)).